Here is a 201-residue protein sequence, read N- to C-terminus: Peptidyl-prolyl cis-trans isomerase CYP19-4 (201 aa).

The signal sequence occupies residues 1 to 23 (MAKASFILLGTLFLFGAIASIQA). In terms of domain architecture, PPIase cyclophilin-type spans 35-198 (YFDVEIDGKS…SKVVIADSGE (164 aa)).

The protein belongs to the cyclophilin-type PPIase family. In terms of assembly, interacts with EMB30/GNOM. As to expression, ubiquitous, mostly in aerial organs (at protein level).

It is found in the cytoplasm. It localises to the membrane. The protein localises to the endoplasmic reticulum. The protein resides in the secreted. The catalysed reaction is [protein]-peptidylproline (omega=180) = [protein]-peptidylproline (omega=0). With respect to regulation, binds cyclosporin A (CsA). CsA mediates some of its effects via an inhibitory action on PPIase. Its function is as follows. PPIases accelerate the folding of proteins. It catalyzes the cis-trans isomerization of proline imidic peptide bonds in oligopeptides. May be involved during embryogenesis and organ development by regulating the folding of EMB30/GNOM, and thus, by modulating its activity. The sequence is that of Peptidyl-prolyl cis-trans isomerase CYP19-4 (CYP19-4) from Arabidopsis thaliana (Mouse-ear cress).